A 1201-amino-acid polypeptide reads, in one-letter code: Zinc finger protein sdc-1 (1201 aa).

7 C2H2-type zinc fingers span residues 117–139 (LTCA…RGVH), 145–168 (YMCQ…RTSC), 233–254 (SSCH…GNVH), 268–290 (YFCH…WRLH), 486–513 (IVCH…LLRH), 521–543 (YHCA…INDC), and 652–674 (VVCF…DYCH). The disordered stretch occupies residues 1164-1201 (KRRNSETREHELIELDTDDLNEPSTSDGRYSFGHHGYR). Residues 1167–1176 (NSETREHELI) show a composition bias toward basic and acidic residues.

As to quaternary structure, component of the SDC complex, which consists of sdc-1, sdc-2 and sdc-3. Within the complex, interacts with sdc-2 and sdc-3.

The protein resides in the nucleus. It is found in the chromosome. Functionally, embryonic transcription factor regulating downstream genes involved specifically in the sex determination and dosage compensation pathways, or regulating other genes involved in the coordinate control of both processes. Component of the SDC complex that functions in sex determination and in X chromosome dosage compensation specifically in hermaphrodite (XX) animals. Involved in the recruitment of the condensin I-like dosage compensation complex to the male sex-determining autosomal gene her-1, thereby contributing to its repression and initiating hermaphrodite sexual development. Similarly, might contribute to X-linked gene repression through recruitment of the dosage compensation complex to the X chromosomes in hermaphrodites. Seems to be involved in the depletion of histone H4 lysine 16 acetylation (H4K16ac) on dosage compensated X chromosomes. Plays a role in developmental rate and body fat regulation downstream of the TOR complex 2 pathway. The chain is Zinc finger protein sdc-1 (sdc-1) from Caenorhabditis elegans.